Consider the following 913-residue polypeptide: Polyribonucleotide nucleotidyltransferase (913 aa).

The interval 407–427 (YMHNYEMPPYSTGETGRVGSP) is disordered. Residues Asp-521 and Asp-527 each coordinate Mg(2+). Positions 587–646 (PRIITTSVPVEKIGEVIGPKGKMINQIQEDTGAEIAIEDDGTVFISSEGGEAAEKAKAII) constitute a KH domain. The S1 motif domain occupies 658-730 (GETYNGKVVK…DRGKISLAIP (73 aa)). The segment at 727-913 (LAIPGFEDQE…VRRDFDPFED (187 aa)) is disordered. Composition is skewed to basic and acidic residues over residues 742 to 789 (SRGD…RRSD), 797 to 865 (DRPR…DRRG), and 872 to 898 (RGSD…ERTE).

Belongs to the polyribonucleotide nucleotidyltransferase family. Mg(2+) serves as cofactor.

It is found in the cytoplasm. The enzyme catalyses RNA(n+1) + phosphate = RNA(n) + a ribonucleoside 5'-diphosphate. In terms of biological role, involved in mRNA degradation. Catalyzes the phosphorolysis of single-stranded polyribonucleotides processively in the 3'- to 5'-direction. The polypeptide is Polyribonucleotide nucleotidyltransferase (Bifidobacterium longum (strain DJO10A)).